The primary structure comprises 244 residues: Small ribosomal subunit protein uS3 (244 aa).

The region spanning 39 to 107 (VREMLRKKLA…PAHINVTEVR (69 aa)) is the KH type-2 domain. The tract at residues 213–244 (VGQEKQDDSPRNDRNDRGDRGDRPSRPAREAR) is disordered. The span at 216–244 (EKQDDSPRNDRNDRGDRGDRPSRPAREAR) shows a compositional bias: basic and acidic residues.

It belongs to the universal ribosomal protein uS3 family. As to quaternary structure, part of the 30S ribosomal subunit. Forms a tight complex with proteins S10 and S14.

Its function is as follows. Binds the lower part of the 30S subunit head. Binds mRNA in the 70S ribosome, positioning it for translation. This chain is Small ribosomal subunit protein uS3, found in Xanthomonas euvesicatoria pv. vesicatoria (strain 85-10) (Xanthomonas campestris pv. vesicatoria).